The primary structure comprises 102 residues: Apolipoprotein A-II (102 aa).

The signal sequence occupies residues 1-18 (MKLLAMVALLVTICSLEG). The residue at position 49 (Met49) is a Methionine sulfoxide.

It belongs to the apolipoprotein A2 family. Monomer. Interacts with NAXE and NDRG1. In terms of tissue distribution, plasma.

Its subcellular location is the secreted. May stabilize HDL (high density lipoprotein) structure by its association with lipids, and affect the HDL metabolism. In Rattus norvegicus (Rat), this protein is Apolipoprotein A-II (Apoa2).